The following is a 546-amino-acid chain: Phosphatidylinositol 4-phosphate 5-kinase type-1 alpha (546 aa).

Residues 66–434 (TSSALKGAIQ…RFQRFMCNTV (369 aa)) form the PIPK domain. K88 is covalently cross-linked (Glycyl lysine isopeptide (Lys-Gly) (interchain with G-Cter in ubiquitin)). Disordered stretches follow at residues 442–475 (PSPTKKFRSGPSFSRRSGPSGNSCTSQLMASGEH) and 491–518 (LGRPDVLPQTPPLEEISEGSPVPGPSFS). Low complexity-rich tracts occupy residues 450-462 (SGPSFSRRSGPSG) and 509-518 (GSPVPGPSFS).

As to quaternary structure, interacts with RAC1. Interacts with TUT1. Forms a complex with CDH1/E-cadherin, CTNNB1/beta-catenin and CTNND1 at the plasma membrane upon calcium stimulation. Found in a ternary complex with IRS1 and DGKZ in the absence of insulin stimulation. Interacts with DGKZ. Interacts with PIP4K2C; the interaction inhibits PIP5K1A kinase activity. Highest expression in brain. Also detected in skeletal muscle, testis, brain and lung.

Its subcellular location is the cell membrane. The protein localises to the cytoplasm. The protein resides in the nucleus. It is found in the nucleus speckle. It localises to the cell projection. Its subcellular location is the ruffle. The protein localises to the lamellipodium. The enzyme catalyses a 1,2-diacyl-sn-glycero-3-phospho-(1D-myo-inositol 4-phosphate) + ATP = a 1,2-diacyl-sn-glycero-3-phospho-(1D-myo-inositol-4,5-bisphosphate) + ADP + H(+). It catalyses the reaction 1-octadecanoyl-2-(5Z,8Z,11Z,14Z)-eicosatetraenoyl-sn-glycero-3-phospho-1D-myo-inositol 4-phosphate + ATP = 1-octadecanoyl-2-(5Z,8Z,11Z,14Z)-eicosatetraenoyl-sn-glycero-3-phospho-1D-myo-inositol 4,5-bisphosphate + ADP + H(+). It carries out the reaction 1,2-dihexadecanoyl-sn-glycero-3-phospho-(1D-myo-inositol-4-phosphate) + ATP = 1,2-dihexadecanoyl-sn-glycero-3-phospho-(1D-myo-inositol-4,5-bisphosphate) + ADP + H(+). The catalysed reaction is 1-octadecanoyl-2-(9Z)-octadecenoyl-sn-glycero-3-phospho-1D-myo-inositol 4-phosphate + ATP = 1-octadecanoyl-2-(9Z)-octadecenoyl-sn-glycero-3-phospho-1D-myo-inositol 4,5-bisphosphate + ADP + H(+). The enzyme catalyses 1-octadecanoyl-2-(9Z)-octadecenoyl-sn-glycero-3-phospho-1D-myo-inositol + ATP = 1-octadecanoyl-2-(9Z)-octadecenoyl-sn-glycero-3-phospho-1D-myo-inositol 5-phosphate + ADP + H(+). It catalyses the reaction 1-octadecanoyl-2-(9Z,12Z)-octadecadienoyl-sn-glycero-3-phospho-1D-myo-inositol + ATP = 1-octadecanoyl-2-(9Z,12Z)-octadecadienoyl-sn-glycero-3-phospho-1D-myo-inositol 5-phosphate + ADP + H(+). It carries out the reaction 1-octadecanoyl-2-(5Z,8Z,11Z,14Z-eicosatetraenoyl)-sn-glycero-3-phospho-(1D-myo-inositol) + ATP = 1-octadecanoyl-2-(5Z,8Z,11Z,14Z)-eicosatetraenoyl-sn-glycero-3-phospho-1D-myo-inositol 5-phosphate + ADP + H(+). The catalysed reaction is 1,2-di-(9Z,12Z)-octadecadienoyl-sn-glycero-3-phospho-1D-myo-inositol + ATP = 1,2-di(9Z,12Z)-octadecadienoyl-sn-glycero-3-phospho-1D-myo-inositol 5-phosphate + ADP + H(+). Activated by phosphatidic acid. In terms of biological role, catalyzes the phosphorylation of phosphatidylinositol 4-phosphate (PtdIns(4)P/PI4P) to form phosphatidylinositol 4,5-bisphosphate (PtdIns(4,5)P2/PIP2), a lipid second messenger that regulates several cellular processes such as signal transduction, vesicle trafficking, actin cytoskeleton dynamics, cell adhesion, and cell motility. PtdIns(4,5)P2 can directly act as a second messenger or can be utilized as a precursor to generate other second messengers: inositol 1,4,5-trisphosphate (IP3), diacylglycerol (DAG) or phosphatidylinositol-3,4,5-trisphosphate (PtdIns(3,4,5)P3/PIP3). PIP5K1A-mediated phosphorylation of PtdIns(4)P is the predominant pathway for PtdIns(4,5)P2 synthesis. Can also use phosphatidylinositol (PtdIns) as substrate in vitro. Together with PIP5K1C, is required for phagocytosis, both enzymes regulating different types of actin remodeling at sequential steps. Promotes particle ingestion by activating the WAS GTPase-binding protein that induces Arp2/3 dependent actin polymerization at the nascent phagocytic cup. Together with PIP5K1B, is required, after stimulation by G-protein coupled receptors, for the synthesis of IP3 that will induce stable platelet adhesion. Recruited to the plasma membrane by the E-cadherin/beta-catenin complex where it provides the substrate PtdIns(4,5)P2 for the production of PtdIns(3,4,5)P3, IP3 and DAG, that will mobilize internal calcium and drive keratinocyte differentiation. Positively regulates insulin-induced translocation of SLC2A4 to the cell membrane in adipocytes. Together with PIP5K1C has a role during embryogenesis. Independently of its catalytic activity, is required for membrane ruffling formation, actin organization and focal adhesion formation during directional cell migration by controlling integrin-induced translocation of the small GTPase RAC1 to the plasma membrane. Also functions in the nucleus where it acts as an activator of TUT1 adenylyltransferase activity in nuclear speckles, thereby regulating mRNA polyadenylation of a select set of mRNAs. This chain is Phosphatidylinositol 4-phosphate 5-kinase type-1 alpha, found in Mus musculus (Mouse).